The primary structure comprises 410 residues: Digeranylgeranylglycerophospholipid reductase (410 aa).

Residues A15, E34, V118, D286, G298, and I299 each contribute to the FAD site. K343 and A379 together coordinate a 2,3-bis-O-(geranylgeranyl)-sn-glycerol 1-phospholipid.

Belongs to the geranylgeranyl reductase family. DGGGPL reductase subfamily. FAD serves as cofactor.

The catalysed reaction is a 2,3-bis-O-phytanyl-sn-glycerol 1-phospholipid + 8 A = a 2,3-bis-O-(geranylgeranyl)-sn-glycerol 1-phospholipid + 8 AH2. It carries out the reaction 2,3-bis-O-(phytanyl)-sn-glycerol 1-phosphate + 8 A = 2,3-bis-O-(geranylgeranyl)-sn-glycerol 1-phosphate + 8 AH2. The enzyme catalyses CDP-2,3-bis-O-(geranylgeranyl)-sn-glycerol + 8 AH2 = CDP-2,3-bis-O-(phytanyl)-sn-glycerol + 8 A. It catalyses the reaction archaetidylserine + 8 AH2 = 2,3-bis-O-phytanyl-sn-glycero-3-phospho-L-serine + 8 A. It functions in the pathway membrane lipid metabolism; glycerophospholipid metabolism. Functionally, is involved in the reduction of 2,3-digeranylgeranylglycerophospholipids (unsaturated archaeols) into 2,3-diphytanylglycerophospholipids (saturated archaeols) in the biosynthesis of archaeal membrane lipids. Can fully reduce the unsaturated isoprenoid side chains of membrane phospholipids and glycolipids. Is also able to reduce the omega-position isoprene of dolichol phosphate. This chain is Digeranylgeranylglycerophospholipid reductase, found in Haloferax volcanii (strain ATCC 29605 / DSM 3757 / JCM 8879 / NBRC 14742 / NCIMB 2012 / VKM B-1768 / DS2) (Halobacterium volcanii).